Reading from the N-terminus, the 95-residue chain is Aspartyl/glutamyl-tRNA(Asn/Gln) amidotransferase subunit C (95 aa).

This sequence belongs to the GatC family. Heterotrimer of A, B and C subunits.

It catalyses the reaction L-glutamyl-tRNA(Gln) + L-glutamine + ATP + H2O = L-glutaminyl-tRNA(Gln) + L-glutamate + ADP + phosphate + H(+). The catalysed reaction is L-aspartyl-tRNA(Asn) + L-glutamine + ATP + H2O = L-asparaginyl-tRNA(Asn) + L-glutamate + ADP + phosphate + 2 H(+). Allows the formation of correctly charged Asn-tRNA(Asn) or Gln-tRNA(Gln) through the transamidation of misacylated Asp-tRNA(Asn) or Glu-tRNA(Gln) in organisms which lack either or both of asparaginyl-tRNA or glutaminyl-tRNA synthetases. The reaction takes place in the presence of glutamine and ATP through an activated phospho-Asp-tRNA(Asn) or phospho-Glu-tRNA(Gln). In Ruthia magnifica subsp. Calyptogena magnifica, this protein is Aspartyl/glutamyl-tRNA(Asn/Gln) amidotransferase subunit C.